The chain runs to 453 residues: GTPase Der (453 aa).

EngA-type G domains follow at residues 4 to 169 (PIVA…PPTT) and 177 to 352 (IKIA…EEHK). GTP is bound by residues 10 to 17 (GRPNVGKS), 57 to 61 (DTGGL), 120 to 123 (NKCE), 183 to 190 (GRPNVGKS), 230 to 234 (DTAGI), and 295 to 298 (NKWD). Residues 353 to 438 (RRVSTSVINE…PIRLLWRSKK (86 aa)) enclose the KH-like domain.

Belongs to the TRAFAC class TrmE-Era-EngA-EngB-Septin-like GTPase superfamily. EngA (Der) GTPase family. As to quaternary structure, associates with the 50S ribosomal subunit.

In terms of biological role, GTPase that plays an essential role in the late steps of ribosome biogenesis. The sequence is that of GTPase Der from Trichormus variabilis (strain ATCC 29413 / PCC 7937) (Anabaena variabilis).